The chain runs to 239 residues: NADH-quinone oxidoreductase subunit I 1 (239 aa).

4Fe-4S ferredoxin-type domains follow at residues 81 to 111 and 123 to 152; these read LVPR…IEAA and AKFV…MDSG. [4Fe-4S] cluster is bound by residues C91, C94, C97, C101, C132, C135, C138, and C142.

The protein belongs to the complex I 23 kDa subunit family. In terms of assembly, NDH-1 is composed of 14 different subunits. Subunits NuoA, H, J, K, L, M, N constitute the membrane sector of the complex. Requires [4Fe-4S] cluster as cofactor.

Its subcellular location is the cell inner membrane. The enzyme catalyses a quinone + NADH + 5 H(+)(in) = a quinol + NAD(+) + 4 H(+)(out). NDH-1 shuttles electrons from NADH, via FMN and iron-sulfur (Fe-S) centers, to quinones in the respiratory chain. The immediate electron acceptor for the enzyme in this species is believed to be ubiquinone. Couples the redox reaction to proton translocation (for every two electrons transferred, four hydrogen ions are translocated across the cytoplasmic membrane), and thus conserves the redox energy in a proton gradient. The polypeptide is NADH-quinone oxidoreductase subunit I 1 (Anaeromyxobacter dehalogenans (strain 2CP-C)).